Reading from the N-terminus, the 736-residue chain is Prolyl 3-hydroxylase 3 (736 aa).

The N-terminal stretch at 1 to 20 (MLRLLRPLLLLLLLPPPGSP) is a signal peptide. TPR repeat units lie at residues 37 to 70 (PDLLYADGLRAYAAGAWAPAVALLREALRSQAAL), 154 to 187 (REPYNYLQRAYYQLKKLDLAAAAAHTFFVANPMH), and 216 to 249 (HWAAYDTGLELLGRQEAGLALPRLEEALQGSLAQ). Positions 253-275 (CRADCEGPEEQQGAEEEEDGAAS) are disordered. The segment covering 258–272 (EGPEEQQGAEEEEDG) has biased composition (acidic residues). A TPR 4 repeat occupies 316-349 (PNQLRRLHEAHAQVGNLSQAIENVLSVLLFYPED). N-linked (GlcNAc...) asparagine glycosylation is found at N331 and N462. The region spanning 561–675 (THLVCRSAIE…RCALALWHTW (115 aa)) is the Fe2OG dioxygenase domain. Fe cation contacts are provided by H584, D586, and H656. The active site involves R666. Residues 681–709 (EQEWIEAKELLQESQEEEEEEEEEMPSKD) are a coiled coil. Residues 689–736 (ELLQESQEEEEEEEEEMPSKDPSPEPPSRRHQRVQDKTGRAPRVREEL) are disordered. Residues 694 to 704 (SQEEEEEEEEE) show a composition bias toward acidic residues. Positions 721–736 (RVQDKTGRAPRVREEL) are enriched in basic and acidic residues. A Prevents secretion from ER motif is present at residues 733–736 (REEL).

This sequence belongs to the leprecan family. In terms of assembly, identified in a complex with PLOD1 and P3H4. The cofactor is Fe cation. L-ascorbate serves as cofactor. In terms of tissue distribution, detected in fetal cartilage (at protein level). Weak expression in heart, lung, ovary and skeletal muscle.

The protein resides in the endoplasmic reticulum. The catalysed reaction is L-prolyl-[collagen] + 2-oxoglutarate + O2 = trans-3-hydroxy-L-prolyl-[collagen] + succinate + CO2. In terms of biological role, part of a complex composed of PLOD1, P3H3 and P3H4 that catalyzes hydroxylation of lysine residues in collagen alpha chains and is required for normal assembly and cross-linkling of collagen fibrils. Required for normal hydroxylation of lysine residues in type I collagen chains in skin, bone, tendon, aorta and cornea. Required for normal skin stability via its role in hydroxylation of lysine residues in collagen alpha chains and in collagen fibril assembly. Apparently not required for normal prolyl 3-hydroxylation on collagen chains, possibly because it functions redundantly with other prolyl 3-hydroxylases. This chain is Prolyl 3-hydroxylase 3, found in Homo sapiens (Human).